A 788-amino-acid chain; its full sequence is Integrin beta-6 (788 aa).

The signal sequence occupies residues 1 to 21; it reads MGIELLCLFFLFLGRNDHVQG. The PSI domain maps to 22-71; sequence GCALGGAETCEDCLLIGPQCAWCSQENFTYLSGVGERCDTPANLLAKGCQ. Residues 22-709 lie on the Extracellular side of the membrane; the sequence is GCALGGAETC…KDCPKPPNSP (688 aa). 28 disulfides stabilise this stretch: cysteine 23–cysteine 41, cysteine 31–cysteine 454, cysteine 34–cysteine 59, cysteine 44–cysteine 70, cysteine 197–cysteine 204, cysteine 252–cysteine 293, cysteine 394–cysteine 406, cysteine 426–cysteine 452, cysteine 456–cysteine 476, cysteine 467–cysteine 479, cysteine 481–cysteine 490, cysteine 492–cysteine 519, cysteine 502–cysteine 517, cysteine 511–cysteine 522, cysteine 524–cysteine 537, cysteine 539–cysteine 560, cysteine 544–cysteine 558, cysteine 552–cysteine 563, cysteine 565–cysteine 574, cysteine 576–cysteine 599, cysteine 583–cysteine 597, cysteine 591–cysteine 602, cysteine 604–cysteine 614, cysteine 617–cysteine 620, cysteine 624–cysteine 670, cysteine 630–cysteine 649, cysteine 633–cysteine 645, and cysteine 678–cysteine 702. Asparagine 48 and asparagine 97 each carry an N-linked (GlcNAc...) asparagine glycan. The 241-residue stretch at 131 to 371 folds into the VWFA domain; that stretch reads YPVDLYYLMD…QLIISAYEEL (241 aa). Residues aspartate 140, serine 142, and serine 144 each contribute to the Mg(2+) site. Ca(2+) contacts are provided by serine 144, aspartate 147, aspartate 148, and glutamate 179. Asparagine 235, aspartate 237, proline 239, and glutamate 240 together coordinate Ca(2+). Residue glutamate 240 coordinates Mg(2+). Residue asparagine 260 is glycosylated (N-linked (GlcNAc...) asparagine). 2 residues coordinate Ca(2+): aspartate 271 and lysine 355. The N-linked (GlcNAc...) asparagine glycan is linked to asparagine 387. N-linked (GlcNAc...) asparagine glycosylation occurs at asparagine 418. 4 consecutive I-EGF domains span residues 456–491, 492–538, 539–575, and 576–615; these read CQKEVEVNSSKCNHGNGSFQCGVCACNPGHMGPHCE, CGED…PYCQ, CDDFSCVRHKGLLCGDNGDCECGECVCRSGWTGEYCN, and CTTSTDQCVSEDGVLCSGRGDCVCGKCICTNPGASGLTCE. Asparagine 463 and asparagine 471 each carry an N-linked (GlcNAc...) asparagine glycan. A helical membrane pass occupies residues 710–730; that stretch reads MIMLGVSLAILLIGVVLLCIW. Residues 731–758 are interaction with HAX1; that stretch reads KLLVSFHDRKEVAKFEAERSKAKWQTGT. Over 731–788 the chain is Cytoplasmic; sequence KLLVSFHDRKEVAKFEAERSKAKWQTGTNPLYRGSTSTFKNVTYKHREKQKVDLSMDG.

Belongs to the integrin beta chain family. As to quaternary structure, heterodimer of an alpha and a beta subunit. Interacts with FLNB. Interacts with HAX1. ITGAV:ITGB6 interacts with FBN1. ITGAV:ITGB6 interacts with TGFB1.

It is found in the cell membrane. The protein resides in the cell junction. The protein localises to the focal adhesion. Its function is as follows. Integrin alpha-V:beta-6 (ITGAV:ITGB6) is a receptor for fibronectin and cytotactin. It recognizes the sequence R-G-D in its ligands. ITGAV:ITGB6 acts as a receptor for fibrillin-1 (FBN1) and mediates R-G-D-dependent cell adhesion to FBN1. Integrin alpha-V:beta-6 (ITGAV:ITGB6) mediates R-G-D-dependent release of transforming growth factor beta-1 (TGF-beta-1) from regulatory Latency-associated peptide (LAP), thereby playing a key role in TGF-beta-1 activation. In Sus scrofa (Pig), this protein is Integrin beta-6 (ITGB6).